A 353-amino-acid polypeptide reads, in one-letter code: 3-isopropylmalate dehydrogenase (353 aa).

Residue 75-88 (GPKWENLPHEHKPE) coordinates NAD(+). Substrate-binding residues include R95, R105, R133, and D219. The Mg(2+) site is built by D219, D243, and D247. Residue 276–288 (GSAPDIAGKNIAN) coordinates NAD(+).

It belongs to the isocitrate and isopropylmalate dehydrogenases family. LeuB type 1 subfamily. In terms of assembly, homodimer. It depends on Mg(2+) as a cofactor. The cofactor is Mn(2+).

The protein resides in the cytoplasm. The catalysed reaction is (2R,3S)-3-isopropylmalate + NAD(+) = 4-methyl-2-oxopentanoate + CO2 + NADH. It functions in the pathway amino-acid biosynthesis; L-leucine biosynthesis; L-leucine from 3-methyl-2-oxobutanoate: step 3/4. In terms of biological role, catalyzes the oxidation of 3-carboxy-2-hydroxy-4-methylpentanoate (3-isopropylmalate) to 3-carboxy-4-methyl-2-oxopentanoate. The product decarboxylates to 4-methyl-2 oxopentanoate. The sequence is that of 3-isopropylmalate dehydrogenase from Chlorobium luteolum (strain DSM 273 / BCRC 81028 / 2530) (Pelodictyon luteolum).